Here is a 168-residue protein sequence, read N- to C-terminus: G/U mismatch-specific DNA glycosylase (168 aa).

It belongs to the uracil-DNA glycosylase (UDG) superfamily. TDG/mug family. In terms of assembly, binds DNA as a monomer.

The protein resides in the cytoplasm. It carries out the reaction Specifically hydrolyzes mismatched double-stranded DNA and polynucleotides, releasing free uracil.. In terms of biological role, excises ethenocytosine and uracil, which can arise by alkylation or deamination of cytosine, respectively, from the corresponding mispairs with guanine in ds-DNA. It is capable of hydrolyzing the carbon-nitrogen bond between the sugar-phosphate backbone of the DNA and the mispaired base. The complementary strand guanine functions in substrate recognition. Required for DNA damage lesion repair in stationary-phase cells. The polypeptide is G/U mismatch-specific DNA glycosylase (Klebsiella pneumoniae (strain 342)).